Reading from the N-terminus, the 1136-residue chain is Phytochrome (1136 aa).

Positions 1 to 28 (MSTTRPRAATHSASSGSVSRSSKHSARV) are disordered. The segment covering 11 to 20 (HSASSGSVSR) has biased composition (low complexity). The region spanning 231–414 (DIRLLCDTVV…VFGIQLNKEV (184 aa)) is the GAF domain. Cys336 contributes to the phytochromobilin binding site. PAS domains follow at residues 629-699 (VTNE…LQGE) and 762-833 (DYRA…TKLR). Residues 913–1132 (YIRQEIRNPL…IINVEFPLAQ (220 aa)) enclose the Histidine kinase domain.

This sequence belongs to the phytochrome family. In terms of assembly, homodimer. In terms of processing, contains one covalently linked phytochromobilin chromophore.

Functionally, regulatory photoreceptor which exists in two forms that are reversibly interconvertible by light: the Pr form that absorbs maximally in the red region of the spectrum and the Pfr form that absorbs maximally in the far-red region. Photoconversion of Pr to Pfr induces an array of morphogenic responses, whereas reconversion of Pfr to Pr cancels the induction of those responses. Pfr controls the expression of a number of nuclear genes including those encoding the small subunit of ribulose-bisphosphate carboxylase, chlorophyll A/B binding protein, protochlorophyllide reductase, rRNA, etc. It also controls the expression of its own gene(s) in a negative feedback fashion. This Picea abies (Norway spruce) protein is Phytochrome.